Consider the following 98-residue polypeptide: Large ribosomal subunit protein uL23 (98 aa).

Belongs to the universal ribosomal protein uL23 family. Part of the 50S ribosomal subunit. Contacts protein L29, and trigger factor when it is bound to the ribosome.

One of the early assembly proteins it binds 23S rRNA. One of the proteins that surrounds the polypeptide exit tunnel on the outside of the ribosome. Forms the main docking site for trigger factor binding to the ribosome. This is Large ribosomal subunit protein uL23 from Rickettsia peacockii (strain Rustic).